Here is a 123-residue protein sequence, read N- to C-terminus: Ribosome-binding factor A (123 aa).

This sequence belongs to the RbfA family. As to quaternary structure, monomer. Binds 30S ribosomal subunits, but not 50S ribosomal subunits or 70S ribosomes.

It is found in the cytoplasm. In terms of biological role, one of several proteins that assist in the late maturation steps of the functional core of the 30S ribosomal subunit. Associates with free 30S ribosomal subunits (but not with 30S subunits that are part of 70S ribosomes or polysomes). Required for efficient processing of 16S rRNA. May interact with the 5'-terminal helix region of 16S rRNA. The chain is Ribosome-binding factor A from Chlamydia trachomatis serovar L2 (strain ATCC VR-902B / DSM 19102 / 434/Bu).